A 223-amino-acid polypeptide reads, in one-letter code: uncharacterized protein (223 aa).

Residues 29–220 (KQTYKMFKED…AKEILKNIGD (192 aa)) form the Tyr recombinase domain. Residues R71, K103, H170, R173, and H196 contribute to the active site. Y205 (O-(3'-phospho-DNA)-tyrosine intermediate) is an active-site residue.

The protein belongs to the 'phage' integrase family.

This is an uncharacterized protein from Methanocaldococcus jannaschii (strain ATCC 43067 / DSM 2661 / JAL-1 / JCM 10045 / NBRC 100440) (Methanococcus jannaschii).